The following is a 151-amino-acid chain: Large ribosomal subunit protein uL15 (151 aa).

The segment at Met-1–Pro-51 is disordered. A compositionally biased stretch (basic residues) spans Ser-15–Arg-24. The segment covering His-26–Met-38 has biased composition (gly residues).

This sequence belongs to the universal ribosomal protein uL15 family. Part of the 50S ribosomal subunit.

In terms of biological role, binds to the 23S rRNA. This Gloeobacter violaceus (strain ATCC 29082 / PCC 7421) protein is Large ribosomal subunit protein uL15.